We begin with the raw amino-acid sequence, 38 residues long: Potassium channel toxin alpha-KTx 2.10 (38 aa).

Intrachain disulfides connect Cys7–Cys29, Cys13–Cys34, and Cys17–Cys36.

As to expression, expressed by the venom gland.

Its subcellular location is the secreted. In terms of biological role, blocks human voltage-gated potassium (Kv) channel Kv1.2/KCNA2. Does not inhibit human Kv1.1/KCNA1 at 100nM concentration. This chain is Potassium channel toxin alpha-KTx 2.10, found in Centruroides bonito (Scorpion).